A 198-amino-acid polypeptide reads, in one-letter code: MIHSHFFAHLSRLKLINRWPLMRNVRTENVSEHSLQVAMVAHALALIKNARFAGNLNPERIALMAVYHDASEVLTGDLPTPVKYYNAQIAHEYKKIEKIAQHKLIEMLPEELRSAYAPLIDEHQHSEAETAIVKQADALCAYLKCLEELSAGNNEFLTAKARLEKTLAQRRSQEMDYFMEVFVPSFSLSLDEISQESL.

Residues 18–19 (RW) and His33 contribute to the substrate site. One can recognise an HD domain in the interval 30–142 (VSEHSLQVAM…VKQADALCAY (113 aa)). A divalent metal cation-binding residues include His33, His68, and Asp69. Substrate is bound by residues Asp69, 77–80 (DLPT), and Asp137. Asp137 is an a divalent metal cation binding site.

The protein belongs to the 5DNU family. As to quaternary structure, homodimer. It depends on a divalent metal cation as a cofactor.

Its subcellular location is the cytoplasm. The catalysed reaction is a 2'-deoxyribonucleoside 5'-phosphate + H2O = a 2'-deoxyribonucleoside + phosphate. Its function is as follows. Catalyzes the strictly specific dephosphorylation of 2'-deoxyribonucleoside 5'-monophosphates. The protein is 5'-deoxynucleotidase ETA_12010 of Erwinia tasmaniensis (strain DSM 17950 / CFBP 7177 / CIP 109463 / NCPPB 4357 / Et1/99).